A 484-amino-acid polypeptide reads, in one-letter code: 6-phosphogluconate dehydrogenase, decarboxylating (484 aa).

NADP(+) contacts are provided by residues 11-16 (GLAVMG), 34-36 (NRT), 76-78 (VRA), and N104. Substrate contacts are provided by residues N104 and 130–132 (SGG). The active-site Proton acceptor is the K185. Residue 188–189 (HN) participates in substrate binding. E192 (proton donor) is an active-site residue. Y193, K262, R289, R447, and H453 together coordinate substrate.

The protein belongs to the 6-phosphogluconate dehydrogenase family. As to quaternary structure, homodimer.

The catalysed reaction is 6-phospho-D-gluconate + NADP(+) = D-ribulose 5-phosphate + CO2 + NADPH. It functions in the pathway carbohydrate degradation; pentose phosphate pathway; D-ribulose 5-phosphate from D-glucose 6-phosphate (oxidative stage): step 3/3. Catalyzes the oxidative decarboxylation of 6-phosphogluconate to ribulose 5-phosphate and CO(2), with concomitant reduction of NADP to NADPH. This is 6-phosphogluconate dehydrogenase, decarboxylating from Aggregatibacter actinomycetemcomitans (Actinobacillus actinomycetemcomitans).